Reading from the N-terminus, the 104-residue chain is Large ribosomal subunit protein uL24 (104 aa).

This sequence belongs to the universal ribosomal protein uL24 family. As to quaternary structure, part of the 50S ribosomal subunit.

In terms of biological role, one of two assembly initiator proteins, it binds directly to the 5'-end of the 23S rRNA, where it nucleates assembly of the 50S subunit. Its function is as follows. One of the proteins that surrounds the polypeptide exit tunnel on the outside of the subunit. The sequence is that of Large ribosomal subunit protein uL24 from Shewanella woodyi (strain ATCC 51908 / MS32).